Reading from the N-terminus, the 352-residue chain is tRNA N6-adenosine threonylcarbamoyltransferase (352 aa).

Fe cation-binding residues include His-109 and His-113. Residues 136–140, Asp-169, Gly-182, Asp-186, and Asn-284 contribute to the substrate site; that span reads TVSGG. Asp-312 serves as a coordination point for Fe cation.

This sequence belongs to the KAE1 / TsaD family. Requires Fe(2+) as cofactor.

The protein localises to the cytoplasm. The enzyme catalyses L-threonylcarbamoyladenylate + adenosine(37) in tRNA = N(6)-L-threonylcarbamoyladenosine(37) in tRNA + AMP + H(+). Required for the formation of a threonylcarbamoyl group on adenosine at position 37 (t(6)A37) in tRNAs that read codons beginning with adenine. Is involved in the transfer of the threonylcarbamoyl moiety of threonylcarbamoyl-AMP (TC-AMP) to the N6 group of A37, together with TsaE and TsaB. TsaD likely plays a direct catalytic role in this reaction. This Chloroherpeton thalassium (strain ATCC 35110 / GB-78) protein is tRNA N6-adenosine threonylcarbamoyltransferase.